Reading from the N-terminus, the 147-residue chain is Hemoglobin anodic subunit beta (147 aa).

A Globin domain is found at 2–147 (EWTEDERTAI…VTSALARQYH (146 aa)). The heme b site is built by histidine 63 and histidine 92.

The protein belongs to the globin family. In terms of assembly, heterotetramer of two alpha chains and two beta chains. In terms of tissue distribution, red blood cells.

In terms of biological role, involved in oxygen transport from gills to the various peripheral tissues. The chain is Hemoglobin anodic subunit beta (hbb1) from Anguilla anguilla (European freshwater eel).